The sequence spans 583 residues: Radixin (583 aa).

One can recognise an FERM domain in the interval 5-295 (INVRVTTMDA…GNHELYMRRR (291 aa)). 60-63 (KLNK) contacts a 1,2-diacyl-sn-glycero-3-phospho-(1D-myo-inositol). N6-succinyllysine is present on K83. A 1,2-diacyl-sn-glycero-3-phospho-(1D-myo-inositol) is bound at residue K278. Disordered stretches follow at residues 310 to 336 (REEK…AEKE), 374 to 407 (ELDQ…AKQA), and 458 to 526 (KTKE…RVNK). The span at 374–400 (ELDQERKRAKEEAERLEKERRAAEEAK) shows a compositional bias: basic and acidic residues. Over residues 469–480 (APPPPPPPPVVP) the composition is skewed to pro residues. Composition is skewed to basic and acidic residues over residues 483–492 (ENEHDEHDEN) and 506–525 (MNHR…ERVN). Phosphothreonine; by ROCK2 is present on T564.

As to quaternary structure, interacts with CPNE1 (via VWFA domain) and CPNE4 (via VWFA domain). Binds NHERF1. Interacts with NHERF1, NHERF2, LAYN, MME/NEP and ICAM2. Interacts (via FERM domain) with SPN/CD43 cytoplasmic tail. Interacts with CD44. Interacts with CLIC5; may work together in a complex which also includes EZR and MYO6 to stabilize linkages between the plasma membrane and subjacent actin cytoskeleton at the base of stereocilia. In terms of processing, phosphorylated by tyrosine-protein kinases. Phosphorylation by ROCK2 suppresses the head-to-tail association of the N-terminal and C-terminal halves resulting in an opened conformation which is capable of actin and membrane-binding.

The protein localises to the cell membrane. Its subcellular location is the cytoplasm. The protein resides in the cytoskeleton. It is found in the cleavage furrow. It localises to the cell projection. The protein localises to the microvillus. Its subcellular location is the stereocilium. A head-to-tail association, of the N-terminal and C-terminal halves results in a closed conformation (inactive form) which is incapable of actin or membrane-binding. Functionally, probably plays a crucial role in the binding of the barbed end of actin filaments to the plasma membrane. This Sus scrofa (Pig) protein is Radixin (RDX).